The following is a 209-amino-acid chain: Uracil phosphoribosyltransferase (209 aa).

Residues arginine 79, arginine 104, and 131–139 (DPMLATGGS) contribute to the 5-phospho-alpha-D-ribose 1-diphosphate site. Uracil-binding positions include isoleucine 194 and 199 to 201 (GDA). Residue aspartate 200 participates in 5-phospho-alpha-D-ribose 1-diphosphate binding.

It belongs to the UPRTase family. The cofactor is Mg(2+).

It carries out the reaction UMP + diphosphate = 5-phospho-alpha-D-ribose 1-diphosphate + uracil. Its pathway is pyrimidine metabolism; UMP biosynthesis via salvage pathway; UMP from uracil: step 1/1. Allosterically activated by GTP. Functionally, catalyzes the conversion of uracil and 5-phospho-alpha-D-ribose 1-diphosphate (PRPP) to UMP and diphosphate. The protein is Uracil phosphoribosyltransferase of Streptococcus mutans serotype c (strain ATCC 700610 / UA159).